Reading from the N-terminus, the 2006-residue chain is Supporter of activation of yellow protein (2006 aa).

8 disordered regions span residues 1–208 (MNDL…RRVE), 313–347 (MPAK…SSLA), 458–564 (EEKP…AQSQ), 744–794 (DTQD…DPAR), 821–916 (DLEG…KSRR), 929–1029 (VSVG…NNNS), 1044–1082 (CSSS…SDPL), and 1099–1196 (QQLR…SAVA). The span at 10 to 60 (VAATSSSGSESGTAVESAAATSTAGSAGAAGRPQSNCSANSNAKSVAASST) shows a compositional bias: low complexity. Positions 67-81 (VSSTSSPAQRDQQLN) are enriched in polar residues. The segment covering 118–128 (SPPPTLPPPTT) has biased composition (pro residues). A compositionally biased stretch (low complexity) spans 129 to 168 (PCDDAPSTTGASASASSASGEAPSAASAAGAAGGPMAATA). Over residues 189 to 199 (ANPNSNANESQ) the composition is skewed to polar residues. The segment covering 321 to 347 (LSSLSPASASSSSASSSSSSSSSSSLA) has biased composition (low complexity). The span at 485–494 (GGESNSSSQE) shows a compositional bias: polar residues. The segment covering 525 to 534 (SLSKEHDPKI) has biased composition (basic and acidic residues). A compositionally biased stretch (low complexity) spans 543-563 (ASNGIASGGSKASKASKSAQS). The segment covering 744-758 (DTQDNNNENHLKRTN) has biased composition (basic and acidic residues). Polar residues-rich tracts occupy residues 759-769 (SEGNESPSSRL) and 828-844 (PPTQ…NGAL). The segment covering 861–870 (PATPQPPPVA) has biased composition (pro residues). 2 stretches are compositionally biased toward basic and acidic residues: residues 936-945 (ADMKAKEKES) and 963-972 (ESPKTRDHRP). Composition is skewed to low complexity over residues 978–990 (RTTT…LQPT) and 1018–1029 (SSESESNNNNNS). Over residues 1053–1080 (GAAANQQVIGGSGSSSMLPPTTILSSSD) the composition is skewed to polar residues. The segment covering 1103–1112 (SSRPSSISCG) has biased composition (low complexity). Residues 1147–1158 (GRGRGRRSRGGR) are compositionally biased toward basic residues. Low complexity predominate over residues 1161 to 1173 (GSSSVDRAVSVGG). Positions 1340 to 1573 (MIQEQVALYL…PPTDLMAQLL (234 aa)) are SAY. The segment at 1579–1685 (AVGSDEIKTS…AGSEDEDGNE (107 aa)) is disordered. 2 stretches are compositionally biased toward low complexity: residues 1627-1652 (TASS…SSDT) and 1660-1677 (FSST…SGAG). Residues 1694–1751 (TCGVCLRSQHRNARDMPEAFIRCYTCRKRVHPSCVDMPPRMVGRVRNYNWQCAGCKCC) form a PHD-type 1; degenerate zinc finger. Residues 1753–1796 (KCRSSQRPGKMLYCEQCDRGYHIYCLGLRTVPDGRWSCERCCFC) form a PHD-type 2; degenerate zinc finger. The tract at residues 1887-1911 (TSAQTDDSPMPSPGLTTNGGRALSP) is disordered.

It belongs to the SAYP family. In terms of tissue distribution, widely expressed. Highly expressed in ovary. Expressed in nursing cells and growing oocytes at all stages of development and accumulates in mature oocytes. Expressed in the nuclei of syncytium blastoderm of early embryos and in the nuclei of different tissues of late embryos, larvae, and adults.

It localises to the nucleus. Its subcellular location is the cytoplasm. It is found in the chromosome. Its function is as follows. Essential transcription regulator during early development. Coactivates transcription of some euchromatin genes and repress transcription in of euchromatin genes translocated to heterochromatin. In Drosophila melanogaster (Fruit fly), this protein is Supporter of activation of yellow protein (e(y)3).